The sequence spans 84 residues: Cytochrome b559 subunit alpha (84 aa).

The chain crosses the membrane as a helical span at residues 22–36; it reads IIHSITIPALFVAGW. Histidine 24 is a binding site for heme.

It belongs to the PsbE/PsbF family. In terms of assembly, heterodimer of an alpha subunit and a beta subunit. PSII is composed of 1 copy each of membrane proteins PsbA, PsbB, PsbC, PsbD, PsbE, PsbF, PsbH, PsbI, PsbJ, PsbK, PsbL, PsbM, PsbT, PsbX, PsbY, PsbZ, Psb30/Ycf12, at least 3 peripheral proteins of the oxygen-evolving complex and a large number of cofactors. It forms dimeric complexes. Heme b is required as a cofactor.

It localises to the plastid. It is found in the chloroplast thylakoid membrane. This b-type cytochrome is tightly associated with the reaction center of photosystem II (PSII). PSII is a light-driven water:plastoquinone oxidoreductase that uses light energy to abstract electrons from H(2)O, generating O(2) and a proton gradient subsequently used for ATP formation. It consists of a core antenna complex that captures photons, and an electron transfer chain that converts photonic excitation into a charge separation. In Guillardia theta (Cryptophyte), this protein is Cytochrome b559 subunit alpha.